A 169-amino-acid polypeptide reads, in one-letter code: Transcription antitermination protein NusB (169 aa).

A disordered region spans residues arginine 147–glutamate 169.

This sequence belongs to the NusB family.

Involved in transcription antitermination. Required for transcription of ribosomal RNA (rRNA) genes. Binds specifically to the boxA antiterminator sequence of the ribosomal RNA (rrn) operons. The chain is Transcription antitermination protein NusB from Chlorobium chlorochromatii (strain CaD3).